Reading from the N-terminus, the 63-residue chain is Large ribosomal subunit protein bL28 (63 aa).

The interval 1–22 is disordered; it reads MSRRCAITGKSAMNGHSVSHAN.

This sequence belongs to the bacterial ribosomal protein bL28 family.

This Campylobacter hominis (strain ATCC BAA-381 / DSM 21671 / CCUG 45161 / LMG 19568 / NCTC 13146 / CH001A) protein is Large ribosomal subunit protein bL28.